A 37-amino-acid polypeptide reads, in one-letter code: Large ribosomal subunit protein bL36 (37 aa).

This sequence belongs to the bacterial ribosomal protein bL36 family.

The sequence is that of Large ribosomal subunit protein bL36 from Aliarcobacter butzleri (strain RM4018) (Arcobacter butzleri).